Here is a 1343-residue protein sequence, read N- to C-terminus: Spermatogenesis-associated protein 31A6 (1343 aa).

Residues 23 to 43 (PWVLDIFLTLVFALGFFFLLL) form a helical membrane-spanning segment. 6 disordered regions span residues 55–88 (PSPS…RECP), 106–235 (GPHL…STLI), 624–654 (DESP…EAQK), 895–951 (PRGI…REAV), 1080–1156 (VQEE…PPSV), and 1309–1331 (KAVS…SHHH). Residues 60–82 (GKRKCPVGRRRRPRGRMKNHSLR) show a composition bias toward basic residues. Positions 165–178 (LASTPSPGPMTTSV) are enriched in polar residues. A compositionally biased stretch (pro residues) spans 198–222 (PEPPALFPHPPHTPDPLACSPPPPK). 2 stretches are compositionally biased toward polar residues: residues 627 to 647 (PGTS…STGE) and 923 to 944 (LTYS…SSKA). 2 stretches are compositionally biased toward basic and acidic residues: residues 1104–1123 (HKSE…RLEG) and 1133–1142 (RKTEDTHQDE).

It belongs to the SPATA31 family.

It localises to the membrane. Its function is as follows. May play a role in spermatogenesis. The protein is Spermatogenesis-associated protein 31A6 (SPATA31A6) of Homo sapiens (Human).